Consider the following 463-residue polypeptide: MHLHFTPRQIVEKLDQYIIGQKDAKKAVAVALRNRYRRSKLAENLRDEIAPKNILMIGPTGVGKTEVARRMAKLVGAPFIKVEATKFTEVGYVGRDVESMVRDLVETSVRIVKEEMVVKVQDKAEEQANQRLVEILVPSPEKQSGFKNPLEMLFGGAQNSNQTSDTQEDVEIEKKRQDVERKLAAGLLEEEIVSIEVTEQQSSMFDMLQGTGMEQMGMNFQDALGSFMPKKTKKRKLSVKEARKLLSNEEAQRLIDMDEVTQEAVYRAEQLGIIFIDEIDKIAGKQSNSVDVSREGVQRDILPIVEGSNVATKYGSVKTDYILFVAAGAFHMSKPSDLIPELQGRFPIRVELTKLSTDDFVKILIEPDNALIKQYMALLATEGIEIEFSDEAIRKIAEIAYQVNQDTDNIGARRLHTIMEKLLEDLSFEASEITLEKITITPQYVEEKLATIAKNKDVSQFIL.

ATP contacts are provided by residues Ile-19, 61 to 66, Asp-277, Glu-341, and Arg-413; that span reads GVGKTE.

Belongs to the ClpX chaperone family. HslU subfamily. In terms of assembly, a double ring-shaped homohexamer of HslV is capped on each side by a ring-shaped HslU homohexamer. The assembly of the HslU/HslV complex is dependent on binding of ATP.

It is found in the cytoplasm. Its function is as follows. ATPase subunit of a proteasome-like degradation complex; this subunit has chaperone activity. The binding of ATP and its subsequent hydrolysis by HslU are essential for unfolding of protein substrates subsequently hydrolyzed by HslV. HslU recognizes the N-terminal part of its protein substrates and unfolds these before they are guided to HslV for hydrolysis. In Bacillus cereus (strain ATCC 14579 / DSM 31 / CCUG 7414 / JCM 2152 / NBRC 15305 / NCIMB 9373 / NCTC 2599 / NRRL B-3711), this protein is ATP-dependent protease ATPase subunit HslU.